The sequence spans 217 residues: MFFRMLKEDIDTVFDQDPAARSYFEVILTYSGLHAIWAHRIAHALYKRKFYFLARLISQVSRFFTGIEIHPGATIGRRFFIDHGMGVVIGETCEIGNNVTVFQGVTLGGTGKEKGKRHPTIKDDALIATGAKVLGSITVGEGSKIGAGSVVLHDVPDFSTVVGIPGRVVVQNGKKVRRDLNHQDLPDPVADRFKSLEQQILELKAELEDRKERINQK.

Belongs to the transferase hexapeptide repeat family.

The protein resides in the cytoplasm. It catalyses the reaction L-serine + acetyl-CoA = O-acetyl-L-serine + CoA. The protein operates within amino-acid biosynthesis; L-cysteine biosynthesis; L-cysteine from L-serine: step 1/2. Its activity is regulated as follows. Inhibited by cysteine. Functionally, catalyzes the acetylation of serine by acetyl-CoA to produce O-acetylserine (OAS). The polypeptide is Serine acetyltransferase (cysE) (Bacillus subtilis (strain 168)).